We begin with the raw amino-acid sequence, 776 residues long: MASLIYRQLLTNSYTVNLSDEIQEIGSTKTQNITINPGPFAQTGYAPVNWGPGETNDSTTIEPVLDGPYQPTSFNPPVGYWMLLSPTAPGVVVEGTNNTDRWLATILIEPNVTSQQRTYTIFGVQEQITVENTSQTQWRFVDVSKTTQNGSYSQYSPLLSTPKLYAVMKYGGRIHTYSGQTPNATTGYYSATNYDSVNMTTFCDFYIIPRSEESKCTEYINNGLPPIQNTRNIIPLALSARNVRSLKAQSNEDIVVSKTSLWKEMQYNRDITIRFKFANSIVKSGGLGYKWSEISFKPANYQYTYMRDGEEVTAHTTCSVNGMNDFSFNGGSLPTDLLISRYEVIKENSYVYIDYWDDSQAFRNMVYVRSLAANLNSVICAGGHYNFALPVGQWPYMTGGAVSLHSAGVTLSTQFTDFVSLNSLRFRFRLAVEEPSFAIMRTRVSGLYGLPAANPNNGREYYEIAGRFSLISLIPSNDNYQTPIANSVTVRQDLERQLGELREEFNALSQEIAMSQLIDLALLPLDMFSMFSGIKSTIDAAKSIATNVMKKFKKSSLASSVSTLTDSLSDAASSLSRGSSIRSVGSSVSAWTDVSTQITDVSSSVSSISTQTSTISRRLRLKEMATQTEGMNFDDISAAVLKTKIDKSIQISPNTLPDIVTEASEKFIPNRAYRVINNDEVFEASTDGRFFAYRVDTFEEIPFDVQKFADLVTDSPVISAIIDFKTLKNLNDNYGIGKQQAFNLLRSDPKVLREFINQNNPIIRNRIEQLIMQCRL.

The tract at residues 65–224 is spike head; it reads LDGPYQPTSF…KCTEYINNGL (160 aa). A disulfide bond links Cys-203 and Cys-216. Residues 248–479 are spike body and stalk (antigen domain); the sequence is AQSNEDIVVS…LISLIPSNDN (232 aa). The short motif at 308–310 is the DGE motif; interaction with ITGA2/ITGB1 heterodimer element; that stretch reads DGE. An intrachain disulfide couples Cys-318 to Cys-380. The hydrophobic; possible role in virus entry into host cell stretch occupies residues 389 to 409; sequence LPVGQWPYMTGGAVSLHSAGV. Positions 448-450 match the YGL motif; interaction with ITGA4 motif; the sequence is YGL. A coiled-coil region spans residues 484-511; sequence IANSVTVRQDLERQLGELREEFNALSQE. The segment at 510 to 776 is spike foot; it reads QEIAMSQLID…IEQLIMQCRL (267 aa). The short motif at 644 to 646 is the KID motif; interaction with HSPA8 element; it reads KID.

Belongs to the rotavirus VP4 family. Homotrimer. VP4 adopts a dimeric appearance above the capsid surface, while forming a trimeric base anchored inside the capsid layer. Only hints of the third molecule are observed above the capsid surface. It probably performs a series of molecular rearrangements during viral entry. Prior to trypsin cleavage, it is flexible. The priming trypsin cleavage triggers its rearrangement into rigid spikes with approximate two-fold symmetry of their protruding parts. After an unknown second triggering event, cleaved VP4 may undergo another rearrangement, in which two VP5* subunits fold back on themselves and join a third subunit to form a tightly associated trimer, shaped like a folded umbrella. Interacts with VP6. Interacts with VP7. As to quaternary structure, homotrimer. The trimer is coiled-coil stabilized by its C-terminus, however, its N-terminus, known as antigen domain or 'body', seems to be flexible allowing it to self-associate either as a dimer or a trimer. In terms of processing, proteolytic cleavage by trypsin results in activation of VP4 functions and greatly increases infectivity. The penetration into the host cell is dependent on trypsin treatment of VP4. It produces two peptides, VP5* and VP8* that remain associated with the virion. Cleavage of VP4 by trypsin probably occurs in vivo in the lumen of the intestine prior to infection of enterocytes. Trypsin seems to be incorporated into the three-layered viral particles but remains inactive as long as the viral outer capsid is intact and would only be activated upon the solubilization of the latter.

The protein localises to the virion. The protein resides in the host rough endoplasmic reticulum. Its subcellular location is the host cell membrane. It localises to the host cytoplasm. It is found in the host cytoskeleton. The protein localises to the host endoplasmic reticulum-Golgi intermediate compartment. Spike-forming protein that mediates virion attachment to the host epithelial cell receptors and plays a major role in cell penetration, determination of host range restriction and virulence. Rotavirus attachment and entry into the host cell probably involves multiple sequential contacts between the outer capsid proteins VP4 and VP7, and the cell receptors. It is subsequently lost, together with VP7, following virus entry into the host cell. Following entry into the host cell, low intracellular or intravesicular Ca(2+) concentration probably causes the calcium-stabilized VP7 trimers to dissociate from the virion. This step is probably necessary for the membrane-disrupting entry step and the release of VP4, which is locked onto the virion by VP7. During the virus exit from the host cell, VP4 seems to be required to target the newly formed virions to the host cell lipid rafts. In terms of biological role, forms the spike 'foot' and 'body' and acts as a membrane permeabilization protein that mediates release of viral particles from endosomal compartments into the cytoplasm. During entry, the part of VP5* that protrudes from the virus folds back on itself and reorganizes from a local dimer to a trimer. This reorganization may be linked to membrane penetration by exposing VP5* hydrophobic region. In integrin-dependent strains, VP5* targets the integrin heterodimer ITGA2/ITGB1 for cell attachment. Functionally, forms the head of the spikes and mediates the recognition of specific host cell surface glycans. It is the viral hemagglutinin and an important target of neutralizing antibodies. In sialic acid-dependent strains, VP8* binds to host cell sialic acid, most probably a ganglioside, providing the initial contact. In some other strains, VP8* mediates the attachment to histo-blood group antigens (HBGAs) for viral entry. The sequence is that of Outer capsid protein VP4 from Rotavirus A (isolate RVA/Dog/United States/Cu-1/1982/G3P5A[3]) (RV-A).